The chain runs to 131 residues: Methyl-coenzyme M reductase operon protein D (131 aa).

As to quaternary structure, MCR is composed of three subunits: alpha, beta, and gamma. The function of proteins C and D is not known.

The protein is Methyl-coenzyme M reductase operon protein D (mcrD) of Methanothermus fervidus.